Consider the following 160-residue polypeptide: Ribonuclease P protein component 2 (160 aa).

Belongs to the eukaryotic/archaeal RNase P protein component 2 family. In terms of assembly, consists of a catalytic RNA component and at least 4-5 protein subunits.

It is found in the cytoplasm. It catalyses the reaction Endonucleolytic cleavage of RNA, removing 5'-extranucleotides from tRNA precursor.. Its function is as follows. Part of ribonuclease P, a protein complex that generates mature tRNA molecules by cleaving their 5'-ends. This chain is Ribonuclease P protein component 2, found in Methanoculleus marisnigri (strain ATCC 35101 / DSM 1498 / JR1).